Reading from the N-terminus, the 1946-residue chain is 1,3-beta-glucan synthase component (1946 aa).

Disordered regions lie at residues 1–127 (MSGY…FSDF) and 152–198 (YGEG…KEPY). Low complexity-rich tracts occupy residues 24–34 (GYYQDDQYYDQ), 43–60 (GDHAAQGDHGAQGTQGDG), and 91–109 (DDYYNNNQGYYDGEYNQGY). Over residues 165-180 (QLSYGGNRSSGASTPN) the composition is skewed to polar residues. N-linked (GlcNAc...) asparagine glycans are attached at residues asparagine 171 and asparagine 290. The interval 297–316 (KRKAKKGKKKGGEAGNEAET) is disordered. 6 helical membrane passes run 489-509 (WFHLLLNFNRIWVIHLTMFWF), 537-557 (FSIVGFGGAIASLIQIFATLA), 576-596 (LLFLIVILVLNVAPGVKVFMF), 618-638 (IGIVHFVIAVFTFLFFSVMPL), 675-695 (FGLWLTVFGAKFGESYVYLTL), and 734-754 (IVLILMTFTDLIFFFLDTYLF). N-linked (GlcNAc...) asparagine glycans are attached at residues asparagine 1017 and asparagine 1312. 5 helical membrane passes run 1356–1376 (NMFIMLSVQSFMLTLMSIGAL), 1413–1433 (CIISIFFVFFISFVPLIVQEL), 1500–1520 (FAGQSIYFGARLLMMLLFATS), 1523–1543 (WQPALTYFWIVLLGLIISPFL), and 1615–1635 (IFLTEILTPLLLAATTTVAYL). Asparagine 1649 is a glycosylation site (N-linked (GlcNAc...) asparagine). Transmembrane regions (helical) follow at residues 1667-1687 (LAVVAFAPIGINAGVLAAMFG), 1703-1723 (FGPVLAGIAHGAAAVFMIIFF), 1738-1758 (LAGIIAAMCIQRFIFKLIVSL), 1803-1823 (FSADFILGHWILFMMAPLILI), and 1864-1884 (AILYFVLFIIFLALVVAPGVI). Asparagine 1918 carries N-linked (GlcNAc...) asparagine glycosylation. The segment at 1920-1946 (TEGKTETGTKAGGADASATDASKLRLF) is disordered. Residues 1925–1940 (ETGTKAGGADASATDA) show a composition bias toward low complexity.

Belongs to the glycosyltransferase 48 family. Component of the 1,3-beta-glucan synthase (GS) complex composed of a catalytic subunit GLS1 and a regulatory subunit RHO1.

It is found in the membrane. Its subcellular location is the cell membrane. The enzyme catalyses [(1-&gt;3)-beta-D-glucosyl](n) + UDP-alpha-D-glucose = [(1-&gt;3)-beta-D-glucosyl](n+1) + UDP + H(+). With respect to regulation, activated by iron ions. Inhibited by manganese, copper and zinc ions. Its function is as follows. Catalytic subunit of the 1,3-beta-glucan synthase (GS). Synthesizes 1,3-beta-glucan, a major structural component of the fungal cell wall. Involved in cell wall synthesis, maintenance and remodeling. In Cordyceps militaris (strain CM01) (Caterpillar fungus), this protein is 1,3-beta-glucan synthase component.